Here is a 210-residue protein sequence, read N- to C-terminus: MAVKIKICGITSLADAWAAHDAGADAMGLVFYPGSPRAVTPQQVAQWRGDLPPFMTVVGLFVNATAQWIASTTALCSLDRIQLHGDESPAQCRAWGARAIRAIRVAEAADLHDLARWPVGALLLDAKIKGSYGGTGACFDWQLLGQAELPKPWILAGGLDPDNVEAAVRQVQPYGVDVSSGVESAPGKKDHNKMHRFVAAVRRAQDGAGL.

It belongs to the TrpF family.

It catalyses the reaction N-(5-phospho-beta-D-ribosyl)anthranilate = 1-(2-carboxyphenylamino)-1-deoxy-D-ribulose 5-phosphate. The protein operates within amino-acid biosynthesis; L-tryptophan biosynthesis; L-tryptophan from chorismate: step 3/5. This chain is N-(5'-phosphoribosyl)anthranilate isomerase, found in Magnetococcus marinus (strain ATCC BAA-1437 / JCM 17883 / MC-1).